Reading from the N-terminus, the 262-residue chain is Apolipoprotein A-I-2 (262 aa).

A signal peptide spans 1–18 (MQFLALALTILLAAATQA). Residues 32 to 63 (VKVAMMEYMAQVKETAQRSIDHLDDTEYKEYK) are 3 X approximate tandem repeats. A run of 2 repeats spans residues 64-85 (VQLS…ESLA) and 87-107 (YSEA…AEVM). The interval 64–262 (VQLSQSLDNL…YETISQAMKA (199 aa)) is 10 X approximate tandem repeats. A 3; half-length repeat occupies 108 to 118 (KDVEELRSQLE). 5 consecutive repeat copies span residues 119 to 140 (PKRA…KRLE), 141 to 162 (PLIK…VKIE), 163 to 184 (PVVE…AKLM), 185 to 206 (PIVE…TLAS), and 207 to 228 (PYAE…EKVV). The stretch at 229 to 239 (PLTTDFKGQLG) is one 9; half-length repeat. Repeat 10 spans residues 240–262 (PAAEQAKEKLMALYETISQAMKA).

The protein belongs to the apolipoprotein A1/A4/E family.

The protein localises to the secreted. Participates in the reverse transport of cholesterol from tissues to the liver for excretion by promoting cholesterol efflux from tissues and by acting as a cofactor for the lecithin cholesterol acyltransferase (LCAT). This chain is Apolipoprotein A-I-2, found in Oncorhynchus mykiss (Rainbow trout).